A 1181-amino-acid chain; its full sequence is MVKSAASQSPSPVTITVTPCKGSGDRSLGLTSPIPRASVITNQNSPLSSRATRRTSISSGNRRSNGDEGRYCSMSVEDLTAETTNSECVLSYTVHIPPTPDHQTVFASQESEEDEMLKGNSNQKSFLSGTIFTGGFKSVTRGHVIDCSMDRADPEKKSGQICWLKGCDEKVVHGRCECGFRICRDCYFDCITSGGGNCPGCKEPYRDINDDPETEEEDEEDEAKPLPQMGESKLDKRLSVVKSFKAQNQAGDFDHTRWLFETKGTYGYGNAVWPKDGYGIGSGGGGNGYETPPEFGERSKRPLTRKVSVSAAIISPYRLLIALRLVALGLFLTWRVRHPNREAMWLWGMSTTCELWFALSWLLDQLPKLCPVNRLTDLGVLKERFESPNLRNPKGRSDLPGIDVFVSTADPEKEPPLVTANTILSILAVDYPVEKLACYLSDDGGALLTFEALAQTASFASTWVPFCRKHNIEPRNPEAYFGQKRNFLKNKVRLDFVRERRRVKREYDEFKVRINSLPEAIRRRSDAYNVHEELRAKKKQMEMMMGNNPQETVIVPKATWMSDGSHWPGTWSSGETDNSRGDHAGIIQAMLAPPNAEPVYGAEADAENLIDTTDVDIRLPMLVYVSREKRPGYDHNKKAGAMNALVRTSAIMSNGPFILNLDCDHYIYNSMALREGMCFMLDRGGDRICYVQFPQRFEGIDPNDRYANHNTVFFDVSMRALDGLQGPMYVGTGCIFRRTALYGFSPPRATEHHGWLGRRKVKISLRRPKAMMKKDDEVSLPINGEYNEEENDDGDIESLLLPKRFGNSNSFVASIPVAEYQGRLIQDLQGKGKNSRPAGSLAVPREPLDAATVAEAISVISCFYEDKTEWGKRVGWIYGSVTEDVVTGYRMHNRGWRSIYCVTKRDAFRGTAPINLTDRLHQVLRWATGSVEIFFSRNNAIFATRRMKFLQRVAYFNVGMYPFTSLFLIVYCILPAISLFSGQFIVQSLDITFLIYLLSITLTLCMLSLLEIKWSGITLHEWWRNEQFWVIGGTSAHPAAVLQGLLKVIAGVDISFTLTSKSSAPEDGDDEFADLYVVKWSFLMVPPLTIMMVNMIAIAVGLARTLYSPFPQWSKLVGGVFFSFWVLCHLYPFAKGLMGRRGRVPTIVFVWSGLLSIIVSLLWVYINPPSGKQDYMQFQFP.

A compositionally biased stretch (polar residues) spans M1–V17. Disordered stretches follow at residues M1–R70 and K202–M229. Over residues S48 to S59 the composition is skewed to low complexity. A compositionally biased stretch (acidic residues) spans D210–E222. Transmembrane regions (helical) follow at residues A312–L332 and A343–L363. D443 is a catalytic residue. A coiled-coil region spans residues V497–E542. D884 is a catalytic residue. A run of 6 helical transmembrane segments spans residues L966 to V986, I991 to E1011, P1038 to L1058, F1082 to L1102, L1116 to G1136, and T1146 to I1166.

Belongs to the glycosyltransferase 2 family. Plant cellulose synthase-like D subfamily. Expressed in vascular tissues.

It is found in the golgi apparatus membrane. Functionally, involved in stem and root growth. Possesses xylan and homogalacturonan synthase activity. The sequence is that of Cellulose synthase-like protein D5 (CSLD5) from Arabidopsis thaliana (Mouse-ear cress).